A 328-amino-acid polypeptide reads, in one-letter code: Beta-agarase C (328 aa).

The N-terminal stretch at 1-17 (MNLTKMAVFAASLFCLA) is a signal peptide. Positions 18-67 (CKNDIDTELEKKSIPESEIQKSEEKLPNEEELTPTDPDEETNKEETVTAN) are excised as a propeptide. The span at 26 to 45 (LEKKSIPESEIQKSEEKLPN) shows a compositional bias: basic and acidic residues. Positions 26-61 (LEKKSIPESEIQKSEEKLPNEEELTPTDPDEETNKE) are disordered. The span at 46–59 (EEELTPTDPDEETN) shows a compositional bias: acidic residues. Residues 70–328 (YDFTGNTPPP…WIHTYQLVEE (259 aa)) enclose the GH16 domain. Substrate contacts are provided by residues Trp-110, 119-129 (KAENSGVSDGK), 133-135 (KAT), Glu-188, Glu-193, and Arg-224. Glu-188 (nucleophile) is an active-site residue. Glu-193 acts as the Proton donor in catalysis.

It belongs to the glycosyl hydrolase 16 family.

The protein resides in the secreted. It catalyses the reaction Hydrolysis of (1-&gt;4)-beta-D-galactosidic linkages in agarose, giving the tetramer as the predominant product.. Functionally, cleaves the beta-1,4-linkages between beta-D-galactose and alpha-L-3,6-anhydro-galactose residues in agarose. Cleaves agarose in a random manner with retention of the anomeric-bond configuration, producing beta-anomers that give rise progressively to alpha-anomers when mutarotation takes place. This chain is Beta-agarase C (agaC), found in Zobellia galactanivorans (strain DSM 12802 / CCUG 47099 / CIP 106680 / NCIMB 13871 / Dsij).